The following is a 279-amino-acid chain: FALAHMVNDFDILKSYLDEGANGVETDITFSDEGEPEYAFHGVPCDCKRWCRRTVGFNEYLQHVRDLSTPGNPKFREHFIAIVLDLKLNGLSQEALAHGGMRLADKLIAYYWAHGRNATRITFIVSVPKTSEKVFLKTFLEEIKAVGYDDMLSKVAFDFTDNGDFSETQKVFEGLGIHEHIWASDGITNCIPLLFRGTSRLEDLIRQRDVPGYKYISKVYAWTYDKETSVVKALELGVDGVMTNYADFVIGIINKPEHSSKYRLATYQDNPFEKFVKSA.

The active site involves His5. Mg(2+)-binding residues include Glu25 and Asp27. The Nucleophile role is filled by His41. Intrachain disulfides connect Cys45-Cys51 and Cys47-Cys190. Residue Asp85 coordinates Mg(2+).

The protein belongs to the arthropod phospholipase D family. Class II subfamily. Mg(2+) is required as a cofactor. Expressed by the venom gland.

The protein localises to the secreted. It catalyses the reaction an N-(acyl)-sphingosylphosphocholine = an N-(acyl)-sphingosyl-1,3-cyclic phosphate + choline. It carries out the reaction an N-(acyl)-sphingosylphosphoethanolamine = an N-(acyl)-sphingosyl-1,3-cyclic phosphate + ethanolamine. The catalysed reaction is a 1-acyl-sn-glycero-3-phosphocholine = a 1-acyl-sn-glycero-2,3-cyclic phosphate + choline. The enzyme catalyses a 1-acyl-sn-glycero-3-phosphoethanolamine = a 1-acyl-sn-glycero-2,3-cyclic phosphate + ethanolamine. In terms of biological role, dermonecrotic toxins cleave the phosphodiester linkage between the phosphate and headgroup of certain phospholipids (sphingolipid and lysolipid substrates), forming an alcohol (often choline) and a cyclic phosphate. This toxin acts on sphingomyelin (SM). It may also act on ceramide phosphoethanolamine (CPE), lysophosphatidylcholine (LPC) and lysophosphatidylethanolamine (LPE), but not on lysophosphatidylserine (LPS), and lysophosphatidylglycerol (LPG). It acts by transphosphatidylation, releasing exclusively cyclic phosphate products as second products. Induces dermonecrosis, hemolysis, increased vascular permeability, edema, inflammatory response, and platelet aggregation. This is Dermonecrotic toxin LspiSicTox-betaIE3ii from Loxosceles spinulosa (Recluse spider).